Here is a 515-residue protein sequence, read N- to C-terminus: 13S globulin seed storage protein (515 aa).

Positions 1–22 (MSTKLILSFSLCLMVLSCSAQA) are cleaved as a signal peptide. Residues 23–96 (AQLWPWRKGQ…RYVIQPGGLL (74 aa)) are igE-binding epitope. Disulfide bonds link Cys-47/Cys-80 and Cys-123/Cys-327. Residues 52–272 (LTASEPSRRV…FRDVDRETIS (221 aa)) enclose the Cupin type-1 1 domain. The segment at 97-172 (LPSYSNAPYI…REGDVIPSPA (76 aa)) is igE-binding epitope with a very strong IgE-binding activity. 3 disordered regions span residues 123 to 156 (CPET…GDQH), 210 to 241 (LAGQ…ESDD), and 295 to 320 (PEDS…GRSN). Composition is skewed to basic and acidic residues over residues 141–156 (HSRE…GDQH), 217–239 (GREE…SRES), and 295–316 (PEDS…ERGS). IgE-binding epitope regions lie at residues 173–248 (GVVQ…LIGA) and 249–320 (NILS…GRSN). The Cupin type-1 2 domain maps to 333 to 482 (QNVNRPSHAD…SYDISTEEAY (150 aa)). The igE-binding epitope with a strong IgE-binding activity stretch occupies residues 347–387 (RAGRINTVNSNNLPILEFLQLSAQHVVLYKNAIIGPRWNLN). 3 igE-binding epitope regions span residues 407 to 457 (EGKS…PIAG), 440 to 476 (EWVE…SYDI), and 475 to 511 (DIST…ERER).

This sequence belongs to the 11S seed storage protein (globulins) family. In terms of assembly, homohexamer. In terms of processing, proteolytically processed from a single precursor to produce an acidic and a basic chain that are linked by a disulfide bond. As to expression, expressed in seeds (at protein level).

Its function is as follows. Seed storage protein. The chain is 13S globulin seed storage protein from Fagopyrum tataricum (Tartarian buckwheat).